A 391-amino-acid chain; its full sequence is Phosphatidate cytidylyltransferase 4, chloroplastic (391 aa).

The transit peptide at 1-61 (MATFAELVLS…SVSRRFLTAV (61 aa)) directs the protein to the chloroplast. 6 helical membrane-spanning segments follow: residues 102 to 122 (IFGI…GWVF), 175 to 195 (FGNI…ALLV), 202 to 222 (FAQL…PSFW), 254 to 274 (VGLV…TFAF), 298 to 318 (IVGL…LSWP), and 321 to 341 (LFSS…GDLT).

It belongs to the CDS family. It depends on Mg(2+) as a cofactor.

It localises to the plastid. It is found in the chloroplast membrane. It carries out the reaction a 1,2-diacyl-sn-glycero-3-phosphate + CTP + H(+) = a CDP-1,2-diacyl-sn-glycerol + diphosphate. It participates in phospholipid metabolism; CDP-diacylglycerol biosynthesis; CDP-diacylglycerol from sn-glycerol 3-phosphate: step 3/3. Highest activities is obtained at about 30 mM CTP and 2 mM phosphatidic acid (PA). In terms of biological role, may be involved in the synthesis of minor phospholipids and in modulation of IP3-mediated signal transduction. Promotes the biosynthesis of plastidial phosphatidylglycerol (PG) which is required for structure and function of thylakoid membranes and, hence, for photoautotrophic growth. The chain is Phosphatidate cytidylyltransferase 4, chloroplastic from Arabidopsis thaliana (Mouse-ear cress).